The following is a 616-amino-acid chain: Adenylosuccinate synthetase 2 (616 aa).

The segment at 1-26 is disordered; it reads MDKQAERDQSAGPVKTPQETQPPAHN. The segment covering 17–26 has biased composition (polar residues); it reads PQETQPPAHN. GTP is bound by residues 87–93 and 117–119; these read GDEGKGK and GHT. Catalysis depends on D88, which acts as the Proton acceptor. Mg(2+)-binding residues include D88 and G117. Residues 88-91, 115-118, T202, K216, Q328, T343, and K472 each bind IMP; these read DEGK and NAGH. H118 serves as the catalytic Proton donor. Residue 468-474 participates in substrate binding; that stretch reads AVTKKPR. Residues R474 and 603–605 contribute to the GTP site; that span reads GNG.

The protein belongs to the adenylosuccinate synthetase family. In terms of assembly, homodimer. Requires Mg(2+) as cofactor.

Its subcellular location is the cytoplasm. It carries out the reaction IMP + L-aspartate + GTP = N(6)-(1,2-dicarboxyethyl)-AMP + GDP + phosphate + 2 H(+). It participates in purine metabolism; AMP biosynthesis via de novo pathway; AMP from IMP: step 1/2. Functionally, plays an important role in the salvage pathway for purine nucleotide biosynthesis. Catalyzes the first committed step in the biosynthesis of AMP from IMP. The chain is Adenylosuccinate synthetase 2 from Trypanosoma cruzi (strain CL Brener).